Reading from the N-terminus, the 152-residue chain is Ubiquitin-conjugating enzyme E2 B (152 aa).

The UBC core domain maps to P4–N150. The Glycyl thioester intermediate role is filled by C88.

It belongs to the ubiquitin-conjugating enzyme family. In terms of assembly, interacts with RAD18, UBR2 and WAC.

Its subcellular location is the cell membrane. The protein localises to the nucleus. It catalyses the reaction S-ubiquitinyl-[E1 ubiquitin-activating enzyme]-L-cysteine + [E2 ubiquitin-conjugating enzyme]-L-cysteine = [E1 ubiquitin-activating enzyme]-L-cysteine + S-ubiquitinyl-[E2 ubiquitin-conjugating enzyme]-L-cysteine.. It participates in protein modification; protein ubiquitination. E2 ubiquitin-conjugating enzyme that accepts ubiquitin from the ubiquitin-activating enzyme E1 and transfers it to a E3 ubiquitin-protein ligase. In vitro catalyzes 'Lys-11'-, as well as 'Lys-48'- and 'Lys-63'-linked polyubiquitination. Together with the E3 enzyme BRE1 (RNF20 and/or RNF40), plays a role in transcription regulation by catalyzing the monoubiquitination of histone H2B at 'Lys-120' to form H2BK120ub1. H2BK120ub1 gives a specific tag for epigenetic transcriptional activation, elongation by RNA polymerase II, telomeric silencing, and is also a prerequisite for H3K4me and H3K79me formation. May play a role in DNA repair. Associates to the E3 ligase RAD18 to form the UBE2B-RAD18 ubiquitin ligase complex involved in mono-ubiquitination of DNA-associated PCNA on 'Lys-164'. In association with the E3 enzyme UBR4, is involved in N-end rule-dependent protein degradation. May be involved in neurite outgrowth. The polypeptide is Ubiquitin-conjugating enzyme E2 B (UBE2B) (Bos taurus (Bovine)).